Consider the following 102-residue polypeptide: Small ribosomal subunit protein uS10 (102 aa).

The protein belongs to the universal ribosomal protein uS10 family. Part of the 30S ribosomal subunit.

In terms of biological role, involved in the binding of tRNA to the ribosomes. This chain is Small ribosomal subunit protein uS10, found in Streptococcus suis (strain 98HAH33).